Consider the following 148-residue polypeptide: Transcription antitermination protein NusB (148 aa).

The protein belongs to the NusB family.

Functionally, involved in transcription antitermination. Required for transcription of ribosomal RNA (rRNA) genes. Binds specifically to the boxA antiterminator sequence of the ribosomal RNA (rrn) operons. The sequence is that of Transcription antitermination protein NusB from Aquifex aeolicus (strain VF5).